A 335-amino-acid chain; its full sequence is Dihydroorotate dehydrogenase (quinone) (335 aa).

FMN is bound by residues 58 to 62 (AGADK) and T82. Position 62 (K62) interacts with substrate. Residue 107–111 (NRNGF) coordinates substrate. FMN is bound by residues N135 and N168. A substrate-binding site is contributed by N168. S171 serves as the catalytic Nucleophile. N173 is a substrate binding site. Residues K213 and G241 each coordinate FMN. 242-243 (NT) serves as a coordination point for substrate. FMN-binding positions include G264, G293, and 314 to 315 (YS).

Belongs to the dihydroorotate dehydrogenase family. Type 2 subfamily. In terms of assembly, monomer. The cofactor is FMN.

It localises to the cell membrane. The enzyme catalyses (S)-dihydroorotate + a quinone = orotate + a quinol. It participates in pyrimidine metabolism; UMP biosynthesis via de novo pathway; orotate from (S)-dihydroorotate (quinone route): step 1/1. Its function is as follows. Catalyzes the conversion of dihydroorotate to orotate with quinone as electron acceptor. The protein is Dihydroorotate dehydrogenase (quinone) of Actinobacillus pleuropneumoniae serotype 3 (strain JL03).